Consider the following 414-residue polypeptide: 2,3-diketo-5-methylthiopentyl-1-phosphate enolase (414 aa).

Lysine 99 serves as the catalytic Proton acceptor. Substrate is bound by residues lysine 148, 174-177, histidine 265, glycine 338, and 360-361; these read KDDE and GG. Residues lysine 174, aspartate 176, and glutamate 177 each coordinate Mg(2+). Lysine 174 is modified (N6-carboxylysine).

This sequence belongs to the RuBisCO large chain family. Type IV subfamily. In terms of assembly, homodimer. Mg(2+) serves as cofactor.

The catalysed reaction is 5-methylsulfanyl-2,3-dioxopentyl phosphate = 2-hydroxy-5-methylsulfanyl-3-oxopent-1-enyl phosphate. The protein operates within amino-acid biosynthesis; L-methionine biosynthesis via salvage pathway; L-methionine from S-methyl-5-thio-alpha-D-ribose 1-phosphate: step 3/6. Catalyzes the enolization of 2,3-diketo-5-methylthiopentyl-1-phosphate (DK-MTP-1-P) into 2-hydroxy-3-keto-5-methylthiopentenyl-1-phosphate (HK-MTPenyl-1-P). The protein is 2,3-diketo-5-methylthiopentyl-1-phosphate enolase of Bacillus cereus (strain ZK / E33L).